Here is a 188-residue protein sequence, read N- to C-terminus: Putative manganese efflux pump MntP (188 aa).

6 helical membrane-spanning segments follow: residues 3–23 (MITL…VALG), 39–59 (LGWH…LAGL), 65–85 (IETY…GKMI), 104–124 (GMSL…VGLS), 125–145 (LAIV…IAGV), and 167–187 (IAGG…HTLG).

It belongs to the MntP (TC 9.B.29) family.

The protein localises to the cell inner membrane. Its function is as follows. Probably functions as a manganese efflux pump. This chain is Putative manganese efflux pump MntP, found in Syntrophotalea carbinolica (strain DSM 2380 / NBRC 103641 / GraBd1) (Pelobacter carbinolicus).